A 116-amino-acid polypeptide reads, in one-letter code: CDKN2AIP N-terminal-like protein (116 aa).

Met1 is modified (N-acetylmethionine). Residues 24 to 116 (AEQFRSYSES…RSELMRKHQS (93 aa)) enclose the XRN2-binding (XTBD) domain.

The protein belongs to the CARF family. Interacts with XRN2; the interaction is direct.

This is CDKN2AIP N-terminal-like protein (Cdkn2aipnl) from Mus musculus (Mouse).